The chain runs to 131 residues: Outer membrane protein assembly factor BamE (131 aa).

The N-terminal stretch at 1–16 is a signal peptide; sequence MRNLLLVAAVALSTAG. Residue C17 is the site of N-palmitoyl cysteine attachment. The S-diacylglycerol cysteine moiety is linked to residue C17. The interval 112 to 131 is disordered; sequence SAPKQFGRNLARDKKKQRGR.

The protein belongs to the BamE family. Part of the Bam complex.

It is found in the cell outer membrane. Its function is as follows. Part of the outer membrane protein assembly complex, which is involved in assembly and insertion of beta-barrel proteins into the outer membrane. This is Outer membrane protein assembly factor BamE from Xanthomonas campestris pv. campestris (strain ATCC 33913 / DSM 3586 / NCPPB 528 / LMG 568 / P 25).